The primary structure comprises 405 residues: tRNA (uracil(54)-C(5))-methyltransferase (405 aa).

Positions 61, 67, 70, and 137 each coordinate [4Fe-4S] cluster. S-adenosyl-L-methionine contacts are provided by residues Gln252, Tyr278, Thr283, 299–300 (DS), Asp326, and Asp340. Residue Cys367 is the Nucleophile of the active site. The active-site Proton acceptor is Glu399.

This sequence belongs to the class I-like SAM-binding methyltransferase superfamily. RNA M5U methyltransferase family.

It carries out the reaction uridine(54) in tRNA + S-adenosyl-L-methionine = 5-methyluridine(54) in tRNA + S-adenosyl-L-homocysteine + H(+). With respect to regulation, activated by magnesium ions. Functionally, catalyzes the formation of 5-methyl-uridine at position 54 (m5U54) in tRNA. In Pyrococcus abyssi (strain GE5 / Orsay), this protein is tRNA (uracil(54)-C(5))-methyltransferase.